The following is a 62-amino-acid chain: Large ribosomal subunit protein bL28 (62 aa).

The protein belongs to the bacterial ribosomal protein bL28 family.

The sequence is that of Large ribosomal subunit protein bL28 from Syntrophomonas wolfei subsp. wolfei (strain DSM 2245B / Goettingen).